The chain runs to 555 residues: Lysine--tRNA ligase (555 aa).

Residues 37 to 45 (TSGRLHVGN) carry the 'HIGH' region motif. The 'KMSKS' region motif lies at 301-305 (AMSSS).

It belongs to the class-I aminoacyl-tRNA synthetase family.

It localises to the cytoplasm. The catalysed reaction is tRNA(Lys) + L-lysine + ATP = L-lysyl-tRNA(Lys) + AMP + diphosphate. This is Lysine--tRNA ligase from Methanopyrus kandleri (strain AV19 / DSM 6324 / JCM 9639 / NBRC 100938).